The sequence spans 145 residues: Putative antiporter subunit mnhG2 (145 aa).

The next 3 helical transmembrane spans lie at 11–31 (IAAV…IGIV), 51–71 (VLLT…FFSV), and 72–92 (RLLL…HLVA).

It belongs to the CPA3 antiporters (TC 2.A.63) subunit G family. In terms of assembly, may form a heterooligomeric complex that consists of seven subunits: mnhA2, mnhB2, mnhC2, mnhD2, mnhE2, mnhF2 and mnhG2.

It localises to the cell membrane. This Staphylococcus aureus (strain COL) protein is Putative antiporter subunit mnhG2 (mnhG2).